Here is a 370-residue protein sequence, read N- to C-terminus: UDP-N-acetylglucosamine--N-acetylmuramyl-(pentapeptide) pyrophosphoryl-undecaprenol N-acetylglucosamine transferase (370 aa).

Residues 10–12 (TGG), N124, S196, I253, and Q298 contribute to the UDP-N-acetyl-alpha-D-glucosamine site.

Belongs to the glycosyltransferase 28 family. MurG subfamily.

It localises to the cell membrane. It catalyses the reaction Mur2Ac(oyl-L-Ala-gamma-D-Glu-L-Lys-D-Ala-D-Ala)-di-trans,octa-cis-undecaprenyl diphosphate + UDP-N-acetyl-alpha-D-glucosamine = beta-D-GlcNAc-(1-&gt;4)-Mur2Ac(oyl-L-Ala-gamma-D-Glu-L-Lys-D-Ala-D-Ala)-di-trans,octa-cis-undecaprenyl diphosphate + UDP + H(+). It functions in the pathway cell wall biogenesis; peptidoglycan biosynthesis. Functionally, cell wall formation. Catalyzes the transfer of a GlcNAc subunit on undecaprenyl-pyrophosphoryl-MurNAc-pentapeptide (lipid intermediate I) to form undecaprenyl-pyrophosphoryl-MurNAc-(pentapeptide)GlcNAc (lipid intermediate II). This chain is UDP-N-acetylglucosamine--N-acetylmuramyl-(pentapeptide) pyrophosphoryl-undecaprenol N-acetylglucosamine transferase, found in Limosilactobacillus reuteri subsp. reuteri (strain JCM 1112) (Lactobacillus reuteri).